The primary structure comprises 149 residues: D-aminoacyl-tRNA deacylase (149 aa).

The short motif at 137 to 138 is the Gly-cisPro motif, important for rejection of L-amino acids element; it reads GP.

The protein belongs to the DTD family. In terms of assembly, homodimer.

Its subcellular location is the cytoplasm. The catalysed reaction is glycyl-tRNA(Ala) + H2O = tRNA(Ala) + glycine + H(+). It catalyses the reaction a D-aminoacyl-tRNA + H2O = a tRNA + a D-alpha-amino acid + H(+). Functionally, an aminoacyl-tRNA editing enzyme that deacylates mischarged D-aminoacyl-tRNAs. Also deacylates mischarged glycyl-tRNA(Ala), protecting cells against glycine mischarging by AlaRS. Acts via tRNA-based rather than protein-based catalysis; rejects L-amino acids rather than detecting D-amino acids in the active site. By recycling D-aminoacyl-tRNA to D-amino acids and free tRNA molecules, this enzyme counteracts the toxicity associated with the formation of D-aminoacyl-tRNA entities in vivo and helps enforce protein L-homochirality. The protein is D-aminoacyl-tRNA deacylase of Desulfotalea psychrophila (strain LSv54 / DSM 12343).